The chain runs to 450 residues: Tubulin alpha-6 chain (450 aa).

Residues glutamine 11, glutamate 71, glycine 144, threonine 145, threonine 179, asparagine 206, and asparagine 228 each contribute to the GTP site. Glutamate 71 lines the Mg(2+) pocket. The active site involves glutamate 254.

This sequence belongs to the tubulin family. In terms of assembly, dimer of alpha and beta chains. A typical microtubule is a hollow water-filled tube with an outer diameter of 25 nm and an inner diameter of 15 nM. Alpha-beta heterodimers associate head-to-tail to form protofilaments running lengthwise along the microtubule wall with the beta-tubulin subunit facing the microtubule plus end conferring a structural polarity. Microtubules usually have 13 protofilaments but different protofilament numbers can be found in some organisms and specialized cells. It depends on Mg(2+) as a cofactor. Undergoes a tyrosination/detyrosination cycle, the cyclic removal and re-addition of a C-terminal tyrosine residue by the enzymes tubulin tyrosine carboxypeptidase (TTCP) and tubulin tyrosine ligase (TTL), respectively.

The protein resides in the cytoplasm. It localises to the cytoskeleton. It carries out the reaction GTP + H2O = GDP + phosphate + H(+). Tubulin is the major constituent of microtubules, a cylinder consisting of laterally associated linear protofilaments composed of alpha- and beta-tubulin heterodimers. Microtubules grow by the addition of GTP-tubulin dimers to the microtubule end, where a stabilizing cap forms. Below the cap, tubulin dimers are in GDP-bound state, owing to GTPase activity of alpha-tubulin. This is Tubulin alpha-6 chain (TUBA6) from Zea mays (Maize).